Here is a 201-residue protein sequence, read N- to C-terminus: Probable nicotinate-nucleotide adenylyltransferase (201 aa).

This sequence belongs to the NadD family.

It catalyses the reaction nicotinate beta-D-ribonucleotide + ATP + H(+) = deamido-NAD(+) + diphosphate. The protein operates within cofactor biosynthesis; NAD(+) biosynthesis; deamido-NAD(+) from nicotinate D-ribonucleotide: step 1/1. Its function is as follows. Catalyzes the reversible adenylation of nicotinate mononucleotide (NaMN) to nicotinic acid adenine dinucleotide (NaAD). This Clostridium botulinum (strain Kyoto / Type A2) protein is Probable nicotinate-nucleotide adenylyltransferase.